A 137-amino-acid polypeptide reads, in one-letter code: Small ribosomal subunit protein uS12 (137 aa).

Disordered regions lie at residues 1 to 21 (MPTI…KSDS) and 34 to 57 (VHTK…TPKK). Aspartate 102 carries the post-translational modification 3-methylthioaspartic acid.

The protein belongs to the universal ribosomal protein uS12 family. Part of the 30S ribosomal subunit. Contacts proteins S8 and S17. May interact with IF1 in the 30S initiation complex.

Functionally, with S4 and S5 plays an important role in translational accuracy. Its function is as follows. Interacts with and stabilizes bases of the 16S rRNA that are involved in tRNA selection in the A site and with the mRNA backbone. Located at the interface of the 30S and 50S subunits, it traverses the body of the 30S subunit contacting proteins on the other side and probably holding the rRNA structure together. The combined cluster of proteins S8, S12 and S17 appears to hold together the shoulder and platform of the 30S subunit. The protein is Small ribosomal subunit protein uS12 of Streptococcus equi subsp. zooepidemicus (strain H70).